Reading from the N-terminus, the 35-residue chain is Photosystem II reaction center protein T (35 aa).

Residues 3–23 (ALVYTFLLVSTLGIIFFAIFF) traverse the membrane as a helical segment.

Belongs to the PsbT family. As to quaternary structure, PSII is composed of 1 copy each of membrane proteins PsbA, PsbB, PsbC, PsbD, PsbE, PsbF, PsbH, PsbI, PsbJ, PsbK, PsbL, PsbM, PsbT, PsbY, PsbZ, Psb30/Ycf12, at least 3 peripheral proteins of the oxygen-evolving complex and a large number of cofactors. It forms dimeric complexes.

It localises to the plastid. Its subcellular location is the chloroplast thylakoid membrane. Found at the monomer-monomer interface of the photosystem II (PS II) dimer, plays a role in assembly and dimerization of PSII. PSII is a light-driven water plastoquinone oxidoreductase, using light energy to abstract electrons from H(2)O, generating a proton gradient subsequently used for ATP formation. The sequence is that of Photosystem II reaction center protein T from Taxus brevifolia (Pacific yew).